The primary structure comprises 389 residues: Geranylgeranyl pyrophosphate synthase A (389 aa).

3 residues coordinate isopentenyl diphosphate: Lys99, Arg102, and His131. 2 residues coordinate Mg(2+): Asp138 and Asp142. Dimethylallyl diphosphate is bound at residue Arg147. Arg148 is a binding site for isopentenyl diphosphate.

Belongs to the FPP/GGPP synthase family. The cofactor is Mg(2+).

The protein resides in the cytoplasm. It carries out the reaction isopentenyl diphosphate + (2E)-geranyl diphosphate = (2E,6E)-farnesyl diphosphate + diphosphate. The enzyme catalyses isopentenyl diphosphate + (2E,6E)-farnesyl diphosphate = (2E,6E,10E)-geranylgeranyl diphosphate + diphosphate. It functions in the pathway isoprenoid biosynthesis; farnesyl diphosphate biosynthesis; farnesyl diphosphate from geranyl diphosphate and isopentenyl diphosphate: step 1/1. The protein operates within isoprenoid biosynthesis; geranylgeranyl diphosphate biosynthesis; geranylgeranyl diphosphate from farnesyl diphosphate and isopentenyl diphosphate: step 1/1. Functionally, catalyzes the trans-addition of the 2 molecules of isopentenyl diphosphate (IPP) onto geranyl diphosphate (GDP) to form geranylgeranyl pyrophosphate (GGDP). Does not catalyze the conversion of dimethylallyl diphosphate (DMAPP). This is Geranylgeranyl pyrophosphate synthase A (GGS-A) from Phomopsis amygdali (Fusicoccum amygdali).